The sequence spans 424 residues: Endo-beta-1,4-galactanase (424 aa).

Residues 1-26 (MKNVLAVFVVLIFVLGAFGTSGPAEA) form the signal peptide. Substrate is bound at residue 142 to 145 (DPAK). The active-site Proton donor is the glutamate 190. Substrate is bound by residues 229–230 (TN) and histidine 263. The Nucleophile role is filled by glutamate 288. A substrate-binding site is contributed by threonine 292. The Ca(2+) site is built by aspartate 297, aspartate 299, histidine 301, and asparagine 303. Substrate-binding residues include lysine 307 and aspartate 384. Ca(2+) is bound by residues serine 392 and aspartate 395.

Belongs to the glycosyl hydrolase 53 family. Requires Ca(2+) as cofactor.

It carries out the reaction The enzyme specifically hydrolyzes (1-&gt;4)-beta-D-galactosidic linkages in type I arabinogalactans.. Its function is as follows. Involved in galactan degradation. Degrades arabinose-free galactan to galactooligosaccharides, producing galactotetraose as the main product along with galactotriose, galactobiose, and galactose. May hydrolyze the beta-1,4-galactan linkages of the galactan portion of arabinogalactan type I, a pectic plant polysaccharide from which most of the arabinose has been removed. The chain is Endo-beta-1,4-galactanase (ganB) from Bacillus licheniformis (strain ATCC 14580 / DSM 13 / JCM 2505 / CCUG 7422 / NBRC 12200 / NCIMB 9375 / NCTC 10341 / NRRL NRS-1264 / Gibson 46).